A 160-amino-acid polypeptide reads, in one-letter code: Competence protein ComGD (160 aa).

The helical transmembrane segment at 30–50 threads the bilayer; the sequence is AFTMLESLLVLGLVSILALGL.

As to quaternary structure, the transformation pili are flexible filaments, consisting mainly of the major pilin ComGC and smaller amounts of the minor pilins, including at least ComGD, ComGF and ComGG, and perhaps ComGE. Interacts with ComGE. Interacts with ComGF. Interacts with ComGG.

The protein localises to the cell membrane. It localises to the cell surface. It is found in the fimbrium. Functionally, required for formation of the type IV-like pilus (T4P) that plays a role in transformation. Transformation pili are dynamically extended and retracted, perhaps thereby promoting DNA uptake and transformation. Involved in transformation. Required for DNA binding. This Streptococcus pneumoniae (strain ATCC BAA-255 / R6) protein is Competence protein ComGD.